The chain runs to 460 residues: Cysteine--tRNA ligase (460 aa).

A Zn(2+)-binding site is contributed by Cys28. A 'HIGH' region motif is present at residues 30 to 40 (MTVYDYCHLGH). Residues Cys209, His234, and Glu238 each coordinate Zn(2+). Positions 266–270 (KMSKS) match the 'KMSKS' region motif. Residue Lys269 participates in ATP binding.

This sequence belongs to the class-I aminoacyl-tRNA synthetase family. As to quaternary structure, monomer. Zn(2+) serves as cofactor.

It localises to the cytoplasm. It carries out the reaction tRNA(Cys) + L-cysteine + ATP = L-cysteinyl-tRNA(Cys) + AMP + diphosphate. This chain is Cysteine--tRNA ligase, found in Pseudomonas putida (strain ATCC 700007 / DSM 6899 / JCM 31910 / BCRC 17059 / LMG 24140 / F1).